Consider the following 510-residue polypeptide: 2,3-bisphosphoglycerate-independent phosphoglycerate mutase (510 aa).

Mn(2+) is bound by residues Asp-16 and Ser-66. Residue Ser-66 is the Phosphoserine intermediate of the active site. Substrate is bound by residues His-127, 156 to 157, Arg-186, Arg-192, 257 to 260, and Lys-333; these read RD and RADR. The Mn(2+) site is built by Asp-400, His-404, Asp-441, His-442, and His-460.

Belongs to the BPG-independent phosphoglycerate mutase family. In terms of assembly, monomer. Requires Mn(2+) as cofactor.

The enzyme catalyses (2R)-2-phosphoglycerate = (2R)-3-phosphoglycerate. It functions in the pathway carbohydrate degradation; glycolysis; pyruvate from D-glyceraldehyde 3-phosphate: step 3/5. In terms of biological role, catalyzes the interconversion of 2-phosphoglycerate and 3-phosphoglycerate. This Gluconobacter oxydans (strain 621H) (Gluconobacter suboxydans) protein is 2,3-bisphosphoglycerate-independent phosphoglycerate mutase.